The following is an 81-amino-acid chain: ATP synthase subunit c, chloroplastic (81 aa).

The next 2 helical transmembrane spans lie at 3–23 (PLIAAASVIAAGLAVGLASIG) and 57–77 (LAFMEALTIYGLVVALALLFA).

It belongs to the ATPase C chain family. In terms of assembly, F-type ATPases have 2 components, F(1) - the catalytic core - and F(0) - the membrane proton channel. F(1) has five subunits: alpha(3), beta(3), gamma(1), delta(1), epsilon(1). F(0) has four main subunits: a(1), b(1), b'(1) and c(10-14). The alpha and beta chains form an alternating ring which encloses part of the gamma chain. F(1) is attached to F(0) by a central stalk formed by the gamma and epsilon chains, while a peripheral stalk is formed by the delta, b and b' chains.

It is found in the plastid. Its subcellular location is the chloroplast thylakoid membrane. F(1)F(0) ATP synthase produces ATP from ADP in the presence of a proton or sodium gradient. F-type ATPases consist of two structural domains, F(1) containing the extramembraneous catalytic core and F(0) containing the membrane proton channel, linked together by a central stalk and a peripheral stalk. During catalysis, ATP synthesis in the catalytic domain of F(1) is coupled via a rotary mechanism of the central stalk subunits to proton translocation. Functionally, key component of the F(0) channel; it plays a direct role in translocation across the membrane. A homomeric c-ring of between 10-14 subunits forms the central stalk rotor element with the F(1) delta and epsilon subunits. The polypeptide is ATP synthase subunit c, chloroplastic (Agrostis stolonifera (Creeping bentgrass)).